The primary structure comprises 66 residues: U1-theraphotoxin-Cg1b (66 aa).

A signal peptide spans 1–21 (MKTSALFVIFGLVLLFCNSFA). The propeptide occupies 22-29 (AELKTTGR). 3 disulfides stabilise this stretch: cysteine 31-cysteine 46, cysteine 38-cysteine 51, and cysteine 45-cysteine 58.

Belongs to the neurotoxin 10 (Hwtx-1) family. 46 (Jztx-7/10/12) subfamily. Expressed by the venom gland.

It is found in the secreted. Its function is as follows. Probable ion channel inhibitor. The polypeptide is U1-theraphotoxin-Cg1b (Chilobrachys guangxiensis (Chinese earth tiger tarantula)).